Consider the following 95-residue polypeptide: Small ribosomal subunit protein uS19 (95 aa).

This sequence belongs to the universal ribosomal protein uS19 family.

Its function is as follows. Protein S19 forms a complex with S13 that binds strongly to the 16S ribosomal RNA. The sequence is that of Small ribosomal subunit protein uS19 from Thermosipho africanus (strain TCF52B).